The chain runs to 526 residues: Catalase (526 aa).

Basic and acidic residues predominate over residues 1–22 (MADDREKSTDQMKLWKEGRGSQ). Residues 1-29 (MADDREKSTDQMKLWKEGRGSQRPDVLTT) are disordered. Active-site residues include histidine 75 and asparagine 148. Histidine 194, serine 201, arginine 203, asparagine 213, lysine 237, tryptophan 303, histidine 305, and lysine 306 together coordinate NADP(+). Residue tyrosine 358 participates in heme binding.

Belongs to the catalase family. In terms of assembly, homotetramer. The cofactor is heme. Requires NADP(+) as cofactor.

The protein localises to the peroxisome matrix. It carries out the reaction 2 H2O2 = O2 + 2 H2O. In terms of biological role, catalyzes the degradation of hydrogen peroxide (H(2)O(2)) generated by peroxisomal oxidases to water and oxygen, thereby protecting cells from the toxic effects of hydrogen peroxide. In Danio rerio (Zebrafish), this protein is Catalase (cat).